Here is a 598-residue protein sequence, read N- to C-terminus: Phospholipase B-like protein G (598 aa).

An N-terminal signal peptide occupies residues 1–24 (MIKSYYLFFIILIFLIFINNFILC). N-linked (GlcNAc...) asparagine glycans are attached at residues Asn50, Asn98, Asn173, Asn341, Asn368, Asn450, Asn480, Asn526, and Asn576.

This sequence belongs to the phospholipase B-like family.

The protein localises to the secreted. Its function is as follows. Probable phospholipase. This is Phospholipase B-like protein G (plbG) from Dictyostelium discoideum (Social amoeba).